Here is a 927-residue protein sequence, read N- to C-terminus: Lysine-specific demethylase JMJ28 (927 aa).

The WRC domain occupies 7 to 52 (VPDEFRCNRSDGKQWRCKRRALEGKKMCESHHSQQSLKRSKQKVAE). A Nuclear localization signal 1 motif is present at residues 30–37 (GKKMCESH). The tract at residues 30-92 (GKKMCESHHS…RLGKSKRKRV (63 aa)) is disordered. A compositionally biased stretch (basic residues) spans 80–91 (RSKRLGKSKRKR). A Nuclear localization signal 2 motif is present at residues 127-134 (EKRKRLPN). Residues cysteine 227, cysteine 230, cysteine 241, cysteine 244, cysteine 250, cysteine 253, cysteine 269, and cysteine 272 each coordinate Zn(2+). The RING-type; degenerate zinc-finger motif lies at 227–273 (CHWCGTRGFGDLISCLSCEREFFCIDCIEKRNKGSKEEVEKKCPVCR). A compositionally biased stretch (basic and acidic residues) spans 330–339 (ENDAEKKEGN). 2 disordered regions span residues 330–359 (ENDAEKKEGNPAEPQIHSSELTSDDRQPCS) and 701–736 (RSKNPAKGRESRFDKGKKRDRLDDYSSSDSESSQHC). Residues 601-881 (FPNHYAEILN…ESIKRVKELN (281 aa)) enclose the JmjC domain.

This sequence belongs to the JARID1 histone demethylase family. Interacts with the FBH transcription factors FBH1, FBH2, FBH3 and FBH4. Fe(2+) is required as a cofactor. In terms of tissue distribution, expressed in inflorescences, flowers, roots, siliques, leaves and stems, especially in the vasculature (mainly phloem), with highest levels in floral organs. Present at high levels in flowers, shoot apex and young seeds, but observed at low levels in dry seeds, root apex and anthers.

It is found in the nucleus. Its function is as follows. May function as histone H3 lysine demethylase and be involved in regulation of gene expression. Regulates flowering time by promoting CONSTANS (CO) and CONSTANS-LIKE genes (e.g. COL2 and COL5) expression via interaction with FBH transcription factors (FBH1, FBH2, FBH3 and FBH4) at their loci to remove H3K9me2 repressive histone marks. Also modulates the expression of several developmental genes such as MYB30, TFS1, AGL6 and RVE2. In Arabidopsis thaliana (Mouse-ear cress), this protein is Lysine-specific demethylase JMJ28.